Consider the following 457-residue polypeptide: tRNA-2-methylthio-N(6)-dimethylallyladenosine synthase (457 aa).

Positions 8 to 123 constitute an MTTase N-terminal domain; it reads KKVFIKTFGC…LPEMLARRDA (116 aa). The [4Fe-4S] cluster site is built by cysteine 17, cysteine 54, cysteine 86, cysteine 160, cysteine 164, and cysteine 167. The Radical SAM core domain occupies 146–379; sequence RVDGATAFVS…QEAIEANGRR (234 aa). Residues 382-449 form the TRAM domain; that stretch reads QSRVGTVQRI…PHSLRGEVLL (68 aa).

The protein belongs to the methylthiotransferase family. MiaB subfamily. Monomer. Requires [4Fe-4S] cluster as cofactor.

The protein localises to the cytoplasm. The enzyme catalyses N(6)-dimethylallyladenosine(37) in tRNA + (sulfur carrier)-SH + AH2 + 2 S-adenosyl-L-methionine = 2-methylsulfanyl-N(6)-dimethylallyladenosine(37) in tRNA + (sulfur carrier)-H + 5'-deoxyadenosine + L-methionine + A + S-adenosyl-L-homocysteine + 2 H(+). Catalyzes the methylthiolation of N6-(dimethylallyl)adenosine (i(6)A), leading to the formation of 2-methylthio-N6-(dimethylallyl)adenosine (ms(2)i(6)A) at position 37 in tRNAs that read codons beginning with uridine. This is tRNA-2-methylthio-N(6)-dimethylallyladenosine synthase from Methylibium petroleiphilum (strain ATCC BAA-1232 / LMG 22953 / PM1).